The following is a 410-amino-acid chain: Arginine deiminase (410 aa).

Cys-400 acts as the Amidino-cysteine intermediate in catalysis.

It belongs to the arginine deiminase family.

Its subcellular location is the cytoplasm. The catalysed reaction is L-arginine + H2O = L-citrulline + NH4(+). It participates in amino-acid degradation; L-arginine degradation via ADI pathway; carbamoyl phosphate from L-arginine: step 1/2. The protein is Arginine deiminase of Bacillus thuringiensis subsp. konkukian (strain 97-27).